Here is a 372-residue protein sequence, read N- to C-terminus: NAD(P)H-quinone oxidoreductase subunit 1 (372 aa).

9 helical membrane-spanning segments follow: residues 27–47, 65–85, 97–117, 128–148, 176–196, 204–224, 254–274, 308–328, and 347–367; these read LLWLPLPMLMMLIVATVGVLV, PEYIGPLGILAPLADGLKLIF, WLFTLGPAVVVIPVFLSYIIV, LAMGVFLWIALSSIAPIGLLM, LALAVLAVAMMSNGLGTVEIV, ILSWNVWRQPIGFLVFWIAAL, FALFYLGAYVNLVLSALLVSV, VLGITMTLIKAYFFVFLAILL, and FLLPVGLVNLLLTAGLKLAFP.

It belongs to the complex I subunit 1 family. As to quaternary structure, NDH-1 is composed of at least 11 different subunits.

The protein localises to the cellular thylakoid membrane. It carries out the reaction a plastoquinone + NADH + (n+1) H(+)(in) = a plastoquinol + NAD(+) + n H(+)(out). The catalysed reaction is a plastoquinone + NADPH + (n+1) H(+)(in) = a plastoquinol + NADP(+) + n H(+)(out). In terms of biological role, NDH-1 shuttles electrons from an unknown electron donor, via FMN and iron-sulfur (Fe-S) centers, to quinones in the respiratory and/or the photosynthetic chain. The immediate electron acceptor for the enzyme in this species is believed to be plastoquinone. Couples the redox reaction to proton translocation, and thus conserves the redox energy in a proton gradient. In Thermosynechococcus vestitus (strain NIES-2133 / IAM M-273 / BP-1), this protein is NAD(P)H-quinone oxidoreductase subunit 1.